Consider the following 370-residue polypeptide: tRNA-specific 2-thiouridylase MnmA (370 aa).

ATP is bound by residues 12–19 (GMSGGVDS) and Leu-38. The active-site Nucleophile is the Cys-105. A disulfide bridge connects residues Cys-105 and Cys-204. Position 129 (Gly-129) interacts with ATP. The segment at 153–155 (KDQ) is interaction with tRNA. The active-site Cysteine persulfide intermediate is Cys-204. The interval 310 to 311 (RY) is interaction with tRNA.

The protein belongs to the MnmA/TRMU family.

Its subcellular location is the cytoplasm. The catalysed reaction is S-sulfanyl-L-cysteinyl-[protein] + uridine(34) in tRNA + AH2 + ATP = 2-thiouridine(34) in tRNA + L-cysteinyl-[protein] + A + AMP + diphosphate + H(+). Functionally, catalyzes the 2-thiolation of uridine at the wobble position (U34) of tRNA, leading to the formation of s(2)U34. This is tRNA-specific 2-thiouridylase MnmA from Desulfitobacterium hafniense (strain Y51).